A 157-amino-acid polypeptide reads, in one-letter code: MKVGIYPGSFDPITNGHIDIIKRASEIYDRVIVSVMQNPNKNPMFTLGERVALIEQIIQPYSNIEVDCFSGLLIDYAREKGAKVIIKGLRAVSDFEYELQMALMNRKLCPEVETVFLMTNSQYSYLSSSLVKEVAKFKGDVSEFVPEIVLQAMSKKS.

Serine 9 is a substrate binding site. Residues 9-10 and histidine 17 contribute to the ATP site; that span reads SF. Substrate contacts are provided by lysine 41, leucine 73, and lysine 87. ATP contacts are provided by residues 88 to 90, glutamate 98, and 123 to 129; these read GLR and YSYLSSS.

It belongs to the bacterial CoaD family. In terms of assembly, homohexamer. Mg(2+) is required as a cofactor.

Its subcellular location is the cytoplasm. The enzyme catalyses (R)-4'-phosphopantetheine + ATP + H(+) = 3'-dephospho-CoA + diphosphate. The protein operates within cofactor biosynthesis; coenzyme A biosynthesis; CoA from (R)-pantothenate: step 4/5. Functionally, reversibly transfers an adenylyl group from ATP to 4'-phosphopantetheine, yielding dephospho-CoA (dPCoA) and pyrophosphate. In Alkaliphilus metalliredigens (strain QYMF), this protein is Phosphopantetheine adenylyltransferase.